A 347-amino-acid polypeptide reads, in one-letter code: Selenide, water dikinase (347 aa).

The active site involves Sec-17. Sec-17 is a non-standard amino acid (selenocysteine). ATP is bound by residues Lys-20 and 48–50; that span reads TAD. Asp-51 contacts Mg(2+). ATP is bound by residues Asp-68, Asp-91, and 139 to 141; that span reads GHS. Asp-91 is a Mg(2+) binding site. Mg(2+) is bound at residue Asp-227.

The protein belongs to the selenophosphate synthase 1 family. Class I subfamily. In terms of assembly, homodimer. Mg(2+) is required as a cofactor.

The enzyme catalyses hydrogenselenide + ATP + H2O = selenophosphate + AMP + phosphate + 2 H(+). In terms of biological role, synthesizes selenophosphate from selenide and ATP. This Haemophilus influenzae (strain 86-028NP) protein is Selenide, water dikinase.